The sequence spans 465 residues: Cysteine--tRNA ligase (465 aa).

C27 contributes to the Zn(2+) binding site. The 'HIGH' region motif lies at 29–39 (PTVYDFIHIGN). C207, H232, and E236 together coordinate Zn(2+). A 'KMSKS' region motif is present at residues 264 to 268 (KMSKS). Position 267 (K267) interacts with ATP.

The protein belongs to the class-I aminoacyl-tRNA synthetase family. Monomer. The cofactor is Zn(2+).

It is found in the cytoplasm. The catalysed reaction is tRNA(Cys) + L-cysteine + ATP = L-cysteinyl-tRNA(Cys) + AMP + diphosphate. In Caldicellulosiruptor saccharolyticus (strain ATCC 43494 / DSM 8903 / Tp8T 6331), this protein is Cysteine--tRNA ligase.